A 233-amino-acid chain; its full sequence is Ribonuclease HII (233 aa).

The RNase H type-2 domain occupies 21 to 211; that stretch reads KIIAGVDEVG…LDALPQWRHL (191 aa). A divalent metal cation-binding residues include D27, E28, and D119.

This sequence belongs to the RNase HII family. Requires Mn(2+) as cofactor. It depends on Mg(2+) as a cofactor.

The protein resides in the cytoplasm. The enzyme catalyses Endonucleolytic cleavage to 5'-phosphomonoester.. Functionally, endonuclease that specifically degrades the RNA of RNA-DNA hybrids. The sequence is that of Ribonuclease HII (rnhB) from Streptomyces coelicolor (strain ATCC BAA-471 / A3(2) / M145).